A 416-amino-acid polypeptide reads, in one-letter code: uncharacterized protein (416 aa).

This is an uncharacterized protein from Methanocaldococcus jannaschii (strain ATCC 43067 / DSM 2661 / JAL-1 / JCM 10045 / NBRC 100440) (Methanococcus jannaschii).